The following is a 128-amino-acid chain: NHP2-like protein 1 (128 aa).

Methionine 1 bears the N-acetylmethionine mark. Threonine 2 carries the N-acetylthreonine; in NHP2-like protein 1, N-terminally processed modification. Lysine 21 is modified (N6-acetyllysine). The interval 36 to 48 is interaction with U4 snRNA and U4atac snRNA; that stretch reads RKGANEATKTLNR. An important for U4 snRNA-binding region spans residues 96–128; that stretch reads SRPVIACSVTIKEGSQLKQQIQSIQQSIERLLV. Residue serine 122 is modified to Phosphoserine.

The protein belongs to the eukaryotic ribosomal protein eL8 family. As to quaternary structure, identified in the spliceosome B complex. Component of the U4/U6-U5 tri-snRNP complex composed of the U4, U6 and U5 snRNAs and at least PRPF3, PRPF4, PRPF6, PRPF8, PRPF31, SNRNP200, TXNL4A, WDR57, SNRNP40, DDX23, CD2BP2, PPIH, NHP2L1, EFTUD2, SART1 and USP39. Interacts with RAD17 and PRPF31. The complex formed by SNU13 and PRPF31 binds U4 snRNA. The complex formed by SNU13 and PRPF31 also binds U4atac snRNA, a characteristic component of specific, less abundant spliceosomal complexes. Part of the small subunit (SSU) processome, composed of more than 70 proteins and the RNA chaperone small nucleolar RNA (snoRNA) U3. Core component of box C/D small nucleolar ribonucleoprotein (snoRNP) particles; the core proteins SNU13, NOP56, NOP58 and FBL or FBLL1 assemble stepwise onto the snoRNA.

The protein resides in the nucleus. It localises to the nucleolus. In terms of biological role, part of the small subunit (SSU) processome, first precursor of the small eukaryotic ribosomal subunit. During the assembly of the SSU processome in the nucleolus, many ribosome biogenesis factors, an RNA chaperone and ribosomal proteins associate with the nascent pre-rRNA and work in concert to generate RNA folding, modifications, rearrangements and cleavage as well as targeted degradation of pre-ribosomal RNA by the RNA exosome. Involved in pre-mRNA splicing as component of the spliceosome. Binds to the 5'-stem-loop of U4 snRNA and thereby contributes to spliceosome assembly. The protein undergoes a conformational change upon RNA-binding. Core component of box C/D small nucleolar ribonucleoprotein (snoRNP) complexes that function in methylation of multiple sites on ribosomal RNAs (rRNAs) and messenger RNAs (mRNAs). The sequence is that of NHP2-like protein 1 from Bos taurus (Bovine).